A 113-amino-acid chain; its full sequence is Large ribosomal subunit protein bL19 (113 aa).

The protein belongs to the bacterial ribosomal protein bL19 family.

This protein is located at the 30S-50S ribosomal subunit interface and may play a role in the structure and function of the aminoacyl-tRNA binding site. The chain is Large ribosomal subunit protein bL19 from Carboxydothermus hydrogenoformans (strain ATCC BAA-161 / DSM 6008 / Z-2901).